Here is a 293-residue protein sequence, read N- to C-terminus: MPELPEVETVRRGLEQKLNNFIIKKVEVCRNSTVAFPTEKEEFIKGLQNSLLYKWDRRGKYLIAELKKIENENIKFPLKKLRQNNGFLVVHLRMTGYFKFIDNSTQPCKHTRIRVFDKKNNELRYIDVRSFGQMWWIKEGLSPNKIIKGLGSLGPEPFSKNFDEKYLKKVISKRKKSIKAILLDQTIVAGIGNIYADESLYSAGISPFRAAKTIKKNELINLKESIVNVLKKSIGSGGTTFSDFRDLEGENGNFGLQTNVYRRTGKECRKCGNLIEKQKIAGRSTHWCPNCQK.

The active-site Schiff-base intermediate with DNA is P2. The active-site Proton donor is the E3. K60 serves as the catalytic Proton donor; for beta-elimination activity. H110, R129, and R174 together coordinate DNA. Residues 259-293 form an FPG-type zinc finger; it reads NVYRRTGKECRKCGNLIEKQKIAGRSTHWCPNCQK. The Proton donor; for delta-elimination activity role is filled by R283.

This sequence belongs to the FPG family. Monomer. Requires Zn(2+) as cofactor.

The catalysed reaction is Hydrolysis of DNA containing ring-opened 7-methylguanine residues, releasing 2,6-diamino-4-hydroxy-5-(N-methyl)formamidopyrimidine.. It catalyses the reaction 2'-deoxyribonucleotide-(2'-deoxyribose 5'-phosphate)-2'-deoxyribonucleotide-DNA = a 3'-end 2'-deoxyribonucleotide-(2,3-dehydro-2,3-deoxyribose 5'-phosphate)-DNA + a 5'-end 5'-phospho-2'-deoxyribonucleoside-DNA + H(+). Involved in base excision repair of DNA damaged by oxidation or by mutagenic agents. Acts as a DNA glycosylase that recognizes and removes damaged bases. Has a preference for oxidized purines, such as 7,8-dihydro-8-oxoguanine (8-oxoG). Has AP (apurinic/apyrimidinic) lyase activity and introduces nicks in the DNA strand. Cleaves the DNA backbone by beta-delta elimination to generate a single-strand break at the site of the removed base with both 3'- and 5'-phosphates. This chain is Formamidopyrimidine-DNA glycosylase, found in Prochlorococcus marinus (strain MIT 9312).